The primary structure comprises 424 residues: WD-40 repeat-containing protein MSI3 (424 aa).

Residue Met1 is modified to N-acetylmethionine. WD repeat units follow at residues 167-207 (GHEQ…TDKV), 216-256 (GHQS…MQHQ), 259-299 (VHER…APLH), 303-343 (KHEG…DEQL), and 362-402 (GHKA…YRED). The DWD box motif lies at 233 to 249 (IFGSAGDDCQLVIWDLR). The tract at residues 394–424 (MAESIYREDDEDEDDDDEGNQNAQHSNENQK) is disordered. Acidic residues predominate over residues 401-412 (EDDEDEDDDDEG). Residues 413-424 (NQNAQHSNENQK) are compositionally biased toward polar residues.

It belongs to the WD repeat RBAP46/RBAP48/MSI1 family.

It localises to the nucleus. In terms of biological role, core histone-binding subunit that may target chromatin assembly factors, chromatin remodeling factors and histone deacetylases to their histone substrates in a manner that is regulated by nucleosomal DNA. This is WD-40 repeat-containing protein MSI3 (MSI3) from Arabidopsis thaliana (Mouse-ear cress).